A 358-amino-acid chain; its full sequence is 3-isopropylmalate dehydrogenase 2 (358 aa).

An NAD(+)-binding site is contributed by 74–87 (GPKWDKLPAESRPE). Residues R94, R104, R132, and D221 each coordinate substrate. 3 residues coordinate Mg(2+): D221, D245, and D249. Position 279 to 291 (279 to 291 (GSAPDIAGQGVAN)) interacts with NAD(+).

It belongs to the isocitrate and isopropylmalate dehydrogenases family. LeuB type 1 subfamily. Homodimer. Requires Mg(2+) as cofactor. The cofactor is Mn(2+).

It localises to the cytoplasm. The catalysed reaction is (2R,3S)-3-isopropylmalate + NAD(+) = 4-methyl-2-oxopentanoate + CO2 + NADH. Its pathway is amino-acid biosynthesis; L-leucine biosynthesis; L-leucine from 3-methyl-2-oxobutanoate: step 3/4. Functionally, catalyzes the oxidation of 3-carboxy-2-hydroxy-4-methylpentanoate (3-isopropylmalate) to 3-carboxy-4-methyl-2-oxopentanoate. The product decarboxylates to 4-methyl-2 oxopentanoate. In Dechloromonas aromatica (strain RCB), this protein is 3-isopropylmalate dehydrogenase 2.